Reading from the N-terminus, the 328-residue chain is Spermatogenesis- and oogenesis-specific basic helix-loop-helix-containing protein 1 (328 aa).

A bHLH domain is found at 53–104 (SCLRRNVISERERRKRMSLSCERLRALLPQFDGRREDMASVLEMSVQFLRLA). Residues 290-328 (EAGSALGSDVDDGTSFLLTAGPSSWPGEWGPGFRAGPPA) form a disordered region. Positions 310–321 (GPSSWPGEWGPG) are enriched in low complexity.

In terms of assembly, forms both hetero- and homodimers with SOHLH2.

It is found in the cytoplasm. Its subcellular location is the nucleus. In terms of biological role, transcription regulator of both male and female germline differentiation. Suppresses genes involved in spermatogonial stem cells maintenance, and induces genes important for spermatogonial differentiation. Coordinates oocyte differentiation without affecting meiosis I. The chain is Spermatogenesis- and oogenesis-specific basic helix-loop-helix-containing protein 1 (SOHLH1) from Homo sapiens (Human).